Here is a 295-residue protein sequence, read N- to C-terminus: Ethanolamine ammonia-lyase small subunit (295 aa).

Positions 207, 228, and 258 each coordinate adenosylcob(III)alamin.

This sequence belongs to the EutC family. The basic unit is a heterodimer which dimerizes to form tetramers. The heterotetramers trimerize; 6 large subunits form a core ring with 6 small subunits projecting outwards. Adenosylcob(III)alamin is required as a cofactor.

The protein resides in the bacterial microcompartment. The catalysed reaction is ethanolamine = acetaldehyde + NH4(+). It functions in the pathway amine and polyamine degradation; ethanolamine degradation. In terms of biological role, catalyzes the deamination of various vicinal amino-alcohols to oxo compounds. Allows this organism to utilize ethanolamine as the sole source of nitrogen and carbon in the presence of external vitamin B12. This chain is Ethanolamine ammonia-lyase small subunit, found in Escherichia fergusonii (strain ATCC 35469 / DSM 13698 / CCUG 18766 / IAM 14443 / JCM 21226 / LMG 7866 / NBRC 102419 / NCTC 12128 / CDC 0568-73).